A 683-amino-acid polypeptide reads, in one-letter code: Protein kinase C eta type (683 aa).

The C2 domain maps to 1–118 (MSSGTMKFNG…LRTAGTSDTF (118 aa)). Phosphoserine is present on residues Ser28 and Ser32. 2 Phorbol-ester/DAG-type zinc fingers span residues 171-222 (GHKF…VTAC) and 245-295 (PHKF…APNC). The residue at position 317 (Ser317) is a Phosphoserine. Residues 355 to 614 (FEFIRVLGKG…EHEILRHPFF (260 aa)) form the Protein kinase domain. Residues 361-369 (LGKGSFGKV) and Lys384 each bind ATP. Catalysis depends on Asp479, which acts as the Proton acceptor. Phosphothreonine; by PDPK1 is present on Thr513. One can recognise an AGC-kinase C-terminal domain in the interval 615–683 (KEIDWAQLNH…FSYVSPELQL (69 aa)). Thr656 carries the phosphothreonine modification. Ser675 carries the phosphoserine modification.

This sequence belongs to the protein kinase superfamily. AGC Ser/Thr protein kinase family. PKC subfamily. As to quaternary structure, interacts with FYN. Interacts with RALA. Interacts with DGKQ. As to expression, predominantly expressed in lung and skin.

The protein resides in the cytoplasm. The enzyme catalyses L-seryl-[protein] + ATP = O-phospho-L-seryl-[protein] + ADP + H(+). The catalysed reaction is L-threonyl-[protein] + ATP = O-phospho-L-threonyl-[protein] + ADP + H(+). Novel PKCs (PRKCD, PRKCE, PRKCH and PRKCQ) are calcium-insensitive, but activated by diacylglycerol (DAG) and phosphatidylserine. Three specific sites; Thr-513 (activation loop of the kinase domain), Thr-656 (turn motif) and Ser-675 (hydrophobic region), need to be phosphorylated for its full activation. Functionally, calcium-independent, phospholipid- and diacylglycerol (DAG)-dependent serine/threonine-protein kinase that is involved in the regulation of cell differentiation in keratinocytes and pre-B cell receptor, mediates regulation of epithelial tight junction integrity and foam cell formation, and is required for glioblastoma proliferation and apoptosis prevention in MCF-7 cells. In keratinocytes, binds and activates the tyrosine kinase FYN, which in turn blocks epidermal growth factor receptor (EGFR) signaling and leads to keratinocyte growth arrest and differentiation. Associates with the cyclin CCNE1-CDK2-CDKN1B complex and inhibits CDK2 kinase activity, leading to RB1 dephosphorylation and thereby G1 arrest in keratinocytes. In association with RALA activates actin depolymerization, which is necessary for keratinocyte differentiation. In the pre-B cell receptor signaling, functions downstream of BLNK by up-regulating IRF4, which in turn activates L chain gene rearrangement. Regulates epithelial tight junctions (TJs) by phosphorylating occludin (OCLN) on threonine residues, which is necessary for the assembly and maintenance of TJs. In association with PLD2 and via TLR4 signaling, is involved in lipopolysaccharide (LPS)-induced RGS2 down-regulation and foam cell formation. Upon PMA stimulation, mediates glioblastoma cell proliferation by activating the mTOR pathway, the PI3K/AKT pathway and the ERK1-dependent phosphorylation of ELK1. Involved in the protection of glioblastoma cells from irradiation-induced apoptosis by preventing caspase-9 activation. In camptothecin-treated MCF-7 cells, regulates NF-kappa-B upstream signaling by activating IKBKB, and confers protection against DNA damage-induced apoptosis. Promotes oncogenic functions of ATF2 in the nucleus while blocking its apoptotic function at mitochondria. Phosphorylates ATF2 which promotes its nuclear retention and transcriptional activity and negatively regulates its mitochondrial localization. This is Protein kinase C eta type (Prkch) from Mus musculus (Mouse).